The chain runs to 157 residues: Mediator of RNA polymerase II transcription subunit 10 (157 aa).

It belongs to the Mediator complex subunit 10 family. As to quaternary structure, component of the Mediator complex, which is composed of at least 21 subunits that form three structurally distinct submodules. The Mediator head module contains MED6, MED8, MED11, SRB4/MED17, SRB5/MED18, ROX3/MED19, SRB2/MED20 and SRB6/MED22, the middle module contains MED1, MED4, NUT1/MED5, MED7, CSE2/MED9, NUT2/MED10, SRB7/MED21 and SOH1/MED31, and the tail module contains MED2, PGD1/MED3, RGR1/MED14, GAL11/MED15 and SIN4/MED16. The head and the middle modules interact directly with RNA polymerase II, whereas the elongated tail module interacts with gene-specific regulatory proteins. NUT2/MED10 interacts directly with SRB7/MED21.

It is found in the nucleus. Functionally, component of the Mediator complex, a coactivator involved in the regulated transcription of nearly all RNA polymerase II-dependent genes. Mediator functions as a bridge to convey information from gene-specific regulatory proteins to the basal RNA polymerase II transcription machinery. The Mediator complex, having a compact conformation in its free form, is recruited to promoters by direct interactions with regulatory proteins and serves for the assembly of a functional preinitiation complex with RNA polymerase II and the general transcription factors. The Mediator complex unfolds to an extended conformation and partially surrounds RNA polymerase II, specifically interacting with the unphosphorylated form of the C-terminal domain (CTD) of RNA polymerase II. The Mediator complex dissociates from the RNA polymerase II holoenzyme and stays at the promoter when transcriptional elongation begins. This chain is Mediator of RNA polymerase II transcription subunit 10 (NUT2), found in Saccharomyces cerevisiae (strain ATCC 204508 / S288c) (Baker's yeast).